Here is a 159-residue protein sequence, read N- to C-terminus: Endoribonuclease YbeY (159 aa).

Positions 125, 129, and 135 each coordinate Zn(2+).

The protein belongs to the endoribonuclease YbeY family. The cofactor is Zn(2+).

It is found in the cytoplasm. Functionally, single strand-specific metallo-endoribonuclease involved in late-stage 70S ribosome quality control and in maturation of the 3' terminus of the 16S rRNA. The polypeptide is Endoribonuclease YbeY (Lactiplantibacillus plantarum (strain ATCC BAA-793 / NCIMB 8826 / WCFS1) (Lactobacillus plantarum)).